We begin with the raw amino-acid sequence, 432 residues long: Adenylosuccinate synthetase (432 aa).

GTP is bound by residues 11-17 (GDEGKGK) and 39-41 (GHT). Catalysis depends on aspartate 12, which acts as the Proton acceptor. 2 residues coordinate Mg(2+): aspartate 12 and glycine 39. IMP contacts are provided by residues 12-15 (DEGK), 37-40 (NAGH), threonine 134, arginine 148, asparagine 230, threonine 245, and arginine 309. Residue histidine 40 is the Proton donor of the active site. Residue 305 to 311 (VTTGRKR) coordinates substrate. GTP-binding positions include arginine 311, 337–339 (KLD), and 419–421 (GTG).

It belongs to the adenylosuccinate synthetase family. In terms of assembly, homodimer. The cofactor is Mg(2+).

Its subcellular location is the cytoplasm. It catalyses the reaction IMP + L-aspartate + GTP = N(6)-(1,2-dicarboxyethyl)-AMP + GDP + phosphate + 2 H(+). It participates in purine metabolism; AMP biosynthesis via de novo pathway; AMP from IMP: step 1/2. Plays an important role in the de novo pathway and in the salvage pathway of purine nucleotide biosynthesis. Catalyzes the first committed step in the biosynthesis of AMP from IMP. This is Adenylosuccinate synthetase from Kluyveromyces lactis (strain ATCC 8585 / CBS 2359 / DSM 70799 / NBRC 1267 / NRRL Y-1140 / WM37) (Yeast).